The sequence spans 344 residues: Ig alpha chain C region (344 aa).

The Ig-like 1 domain maps to 6–99 (PTIYPLTLPP…SNPVQELDVN (94 aa)). Intrachain disulfides connect C26/C84 and C76/C100. N-linked (GlcNAc...) asparagine glycosylation is found at N38 and N99. S101 carries O-linked (GalNAc) serine; in variant MOPC 47A glycosylation. Intrachain disulfides connect C114-C171 and C138-C195. 2 Ig-like domains span residues 116–206 (PSLS…GTLT) and 219–321 (PQVH…KTID). N-linked (GlcNAc...) asparagine glycosylation is present at N329. N-linked (GlcNAc...) asparagine; in variant M511 glycosylation occurs at S331.

Functionally, ig alpha is the major immunoglobulin class in body secretions. It may serve both to defend against local infection and to prevent access of foreign antigens to the general immunologic system. This Mus musculus (Mouse) protein is Ig alpha chain C region.